A 196-amino-acid polypeptide reads, in one-letter code: Calcium channel flower (196 aa).

Helical transmembrane passes span 36-56 (LGIV…LSII), 67-89 (IIQM…ICIE), and 114-134 (AVPP…GLIF).

The protein belongs to the calcium channel flower family. In terms of assembly, homomultimer. Associates with the dally/ magu complex.

The protein resides in the cell membrane. It is found in the cytoplasmic vesicle. It localises to the secretory vesicle. Its subcellular location is the synaptic vesicle membrane. The protein localises to the presynaptic cell membrane. The protein resides in the endosome. With respect to regulation, channel activity is inhibited by La(3+), which reduces Ca(2+) influx and thus inhibits it's function in promoting activity-dependent bulk endocytosis (ADBE) in response to high stimuli. Its function is as follows. Transmembrane protein which mediates synaptic endocytosis, fitness-based cell culling, neuronal culling, morphogen gradient scaling, and calcium transport. Regulates synaptic endocytosis and hence couples exo- with endocytosis. Controls two major modes of synaptic vesicle (SV) endocytosis in the synaptic boutons of neuromuscular junctions (NMJs); Ca(2+) channel-independent Clathrin-mediated endocytosis (CME) in response to mild stimulation, and Ca(2+) channel-dependent activity-dependent bulk endocytosis (ADBE) in response to strong stimulation. Functions in ADBE and subsequent SV reformation from bulk endosomes by initiating Ca(2+) channel-dependent phosphatidylinositol 4,5-bisphosphate (PtdIns(4,5)P2) compartmentalization in synaptic boutons. There it acts at the periactive zone to provide the low Ca(2+) levels required to initiate Calcineurin activation and upregulate PtdIns(4,5)P2. Conversely PtdIns(4,5)P2 enhances fwe Ca(2+) channel-activity, establishing a positive feedback loop that induces PtdIns(4,5)P2 microdomain at the periactive zone. These microdomains trigger bulk membrane invagination (i.e. ADBE) by triggering actin polymerization while also promoting localization of fwe to bulk endosomes, thereby removing the ADBE trigger to reduce endocytosis and prevent excess membrane uptake. PtdIns(4,5)P2 then promotes SV reformation from the bulk endosomes, to coordinate ADBE and subsequent SV reformation. Different combinations of the flower isoforms at the cell membrane are also required for the identification and elimination of suboptimal or supernumerary cells during development, regeneration, and adulthood. Required for the recognition and elimination of unfit cells in the developing wing during cell competition. In the developing pupal retina, mediates the elimination of unwanted postmitotic neurons, including supernumerary photoreceptor neurons that form at the periphery of the retina and are contained within incomplete ommatidia units. Also required for efficient elimination and replacement of old neurons by newly generated neurons during regeneration in the adult brain following mechanical injury. Downstream of the flower fitness fingerprints, cells identified as unwanted or unfit are eliminated via apoptosis through the expression of ahuizotl (azot). However, the cells marked for elimination by the flower isoforms only undergo apoptosis if additional thresholds are met; (1) their neighboring fit/healthy cells express different levels of the fwe isoforms, and (2) the levels of the protective signal SPARC expressed by the loser or unwanted cells are unable to inhibit caspase activation. These additional thresholds for flower-mediated apoptosis, allows useful cells to recover from transient and limited stress before they are unnecessarily eliminated. Functions with dally and magu in a mechanism of scaling, which utilises apoptosis to ensure that the dpp morphogen gradient, which mediates organ growth, remains proportional to the size of the growing wing. In this mechanism, fwe represses dally- and Magu-dependent activity in expanding the gradient, and dally/Magu inhibits fwe-dependent apoptosis to keep cell death rate low. When the levels of these different proteins are optimally regulated the gradient correctly scales with organ growth but when this fails, fwe-mediated apoptosis is activated to trim the developing tissue to match the correct size of the gradient. The sequence is that of Calcium channel flower from Drosophila virilis (Fruit fly).